The sequence spans 1744 residues: Myotubularin-related protein 5 (1744 aa).

The region spanning 14-150 (DTVAVIVLEE…IRFLTYELVE (137 aa)) is the uDENN domain. The 140-residue stretch at 165-304 (ELGFELIPIS…YYNSLHQRLR (140 aa)) folds into the cDENN domain. The dDENN domain occupies 306–412 (VMFTTTSQED…LTRALPRRKH (107 aa)). Residues 787-871 (KGNFDPVLAH…LYSMESFKKL (85 aa)) enclose the GRAM domain. The Myotubularin phosphatase domain occupies 996 to 1447 (NAHIRYAVID…PQIHMWPFLA (452 aa)). Residues 1102-1116 (TGSMTGSQQTLHSKA) show a composition bias toward polar residues. The disordered stretch occupies residues 1102–1123 (TGSMTGSQQTLHSKASSNEESS). The segment at 1540 to 1590 (IHELTPFTVGARPVQCCYCTNILTRWSKAVHCKKCRIHVHEGCVNRNITIG) adopts a Phorbol-ester/DAG-type zinc-finger fold. The region spanning 1643-1743 (PPLCTGYLSK…WKECIEQVIR (101 aa)) is the PH domain.

This sequence belongs to the protein-tyrosine phosphatase family. Non-receptor class myotubularin subfamily.

In terms of biological role, probably acts as an adapter for other myotubularin-like phosphatases. This Caenorhabditis elegans protein is Myotubularin-related protein 5.